The following is a 50-amino-acid chain: Protein PndA (50 aa).

Residues 5–25 (TFLMMLIVICVTILCFVWMVR) traverse the membrane as a helical segment.

It belongs to the Hok/Gef family.

The protein localises to the cell inner membrane. In terms of biological role, toxic component of a type I toxin-antitoxin (TA) system. When expressed is involved in cellular Mg(2+) release and degradation of stable RNA. This is Protein PndA (pndA) from Escherichia coli.